A 418-amino-acid chain; its full sequence is Actin-like protein 7B (418 aa).

The tract at residues 1 to 42 (MATKNSPSPKPMGTAQGDPGEAGTLPAPEAAGIRDTGSTQLK) is disordered. Residue Ser-8 is modified to Phosphoserine.

Belongs to the actin family. Testis specific.

The protein localises to the cytoplasm. It localises to the cytoskeleton. The sequence is that of Actin-like protein 7B (Actl7b) from Mus musculus (Mouse).